Here is an 81-residue protein sequence, read N- to C-terminus: Omega-conotoxin-like TxMKLT1-0223 (81 aa).

The signal sequence occupies residues 1–22 (MKLTCMMIVAVLFLTAWTFVTA). The propeptide occupies 23 to 52 (VPHSSNALENLYLKARHEMENPEASKLNTR). 3 cysteine pairs are disulfide-bonded: Cys55-Cys72, Cys62-Cys76, and Cys71-Cys80.

It belongs to the conotoxin O1 superfamily. In terms of tissue distribution, expressed by the venom duct.

The protein resides in the secreted. Omega-conotoxins act at presynaptic membranes, they bind and block voltage-gated calcium channels (Cav). The chain is Omega-conotoxin-like TxMKLT1-0223 from Conus textile (Cloth-of-gold cone).